A 666-amino-acid chain; its full sequence is MIEMAAEKEPFLVPAPPPPLKDESGGGGGPEVQSHQEAASGELRDGTEHGPGPRAHSAGAAASGGGGPQAQAHGEPHGRAAAPADVGEERRGGGGTDLGPPAPPRPRNGYQPHRPPGGGGGKRRNSCNVGGGSGGSFKHPAFKRRRRVNSDCDSVLPSNFLLGGNIFDPLNLNSLLDEEVSRALNAETPKSSPLPAKGRDPVEILIPKDITDPLSLNTCTDEAHVVLASPLKIGRKRHRHRGPHHQQQQQASGGNDSNAAVLPTDPLTPSLHGEGATQQQQNRGQNRDAPQPYELNTAINCRDEVVSPLPSALQGSSGSLSAPPAASVTSAPSTSSSSRHRKRRRTSSKSEAGARGGSQGSKEKGRGSGGGRHHHHPLPATGFKKQQLKFQYGNYCKYYGYRNPSCEDVRLRVLKPEWFQGRDVLDLGCNVGHLTLSIACKWGPARMVGLDIDPRLIHSARQNIRHYLSEELRLQAQTSEGDPGTEGEEGTITVRKRSCFPASLTASRGPIAAPQVPLDGADTSVFPNNVVFVTGNYVLDRDELVDAQRPEYDVVLCFSLTKWVHLNWGDEGLKRMFRRIYRHLRPGGILVLEPQPWSSYCKRKSLTETIYKNYFRIQLKPEQFSSYLTSPEVGFSSYELVATPNNTSRGFQRPVYLFHKARSPSH.

At Met-1 the chain carries N-acetylmethionine. Residues 1–10 (MIEMAAEKEP) show a composition bias toward basic and acidic residues. The interval 1–141 (MIEMAAEKEP…GSGGSFKHPA (141 aa)) is disordered. A compositionally biased stretch (low complexity) spans 50-61 (GPGPRAHSAGAA). Position 57 is a phosphoserine (Ser-57). At Arg-91 the chain carries Omega-N-methylarginine. Ser-126, Ser-150, and Ser-154 each carry phosphoserine. Thr-188 carries the post-translational modification Phosphothreonine. Ser-191, Ser-192, and Ser-229 each carry phosphoserine. The span at 235-244 (RKRHRHRGPH) shows a compositional bias: basic residues. The disordered stretch occupies residues 235–291 (RKRHRHRGPHHQQQQQASGGNDSNAAVLPTDPLTPSLHGEGATQQQQNRGQNRDAPQ). Low complexity predominate over residues 245-254 (HQQQQQASGG). Thr-268 is subject to Phosphothreonine. Phosphoserine is present on residues Ser-307 and Ser-321. Positions 309–337 (LPSALQGSSGSLSAPPAASVTSAPSTSSS) are enriched in low complexity. The interval 309–383 (LPSALQGSSG…HHHPLPATGF (75 aa)) is disordered. A compositionally biased stretch (basic residues) spans 338–347 (SRHRKRRRTS). Residue Ser-368 is modified to Phosphoserine. S-adenosyl-L-methionine-binding positions include Tyr-399, Arg-410, 428 to 430 (GCN), 451 to 452 (DI), 536 to 537 (NY), and Phe-558. The region spanning 408-663 (DVRLRVLKPE…PVYLFHKARS (256 aa)) is the Bin3-type SAM domain. Lys-620 participates in a covalent cross-link: Glycyl lysine isopeptide (Lys-Gly) (interchain with G-Cter in SUMO2).

The protein belongs to the methyltransferase superfamily. Core component of the 7SK RNP complex, at least composed of 7SK RNA, LARP7, MEPCE, HEXIM1 (or HEXIM2) and P-TEFb (composed of CDK9 and CCNT1/cyclin-T1). Interacts with METTL16. Interacts with RBM7; upon genotoxic stress this interaction is enhanced, triggering the release of inactive P-TEFb complex from the core, yielding to P-TEFb complex activation. In terms of processing, dephosphorylated at Ser-126 by the PNUTS-PP1 complex, promoting RNA polymerase II transcription pause-release.

It is found in the nucleus. The catalysed reaction is a 5'-end triphospho-guanosine-ribonucleotide-snRNA + S-adenosyl-L-methionine = a 5'-end methyltriphosphate-guanosine-ribonucleotide-snRNA + S-adenosyl-L-homocysteine. S-adenosyl-L-methionine-dependent methyltransferase that adds a methylphosphate cap at the 5'-end of 7SK snRNA (7SK RNA), leading to stabilize it. Also has a non-enzymatic function as part of the 7SK RNP complex: the 7SK RNP complex sequesters the positive transcription elongation factor b (P-TEFb) in a large inactive 7SK RNP complex preventing RNA polymerase II phosphorylation and subsequent transcriptional elongation. The 7SK RNP complex also promotes snRNA gene transcription by RNA polymerase II via interaction with the little elongation complex (LEC). In the 7SK RNP complex, MEPCE is required to stabilize 7SK RNA and facilitate the assembly of 7SK RNP complex. MEPCE has a non-enzymatic function in the 7SK RNP complex; it has a non-enzymatic function; interaction with LARP7 within the 7SK RNP complex occluding its catalytic center. Also required for stability of U6 snRNAs. This Mus musculus (Mouse) protein is 7SK snRNA methylphosphate capping enzyme.